A 267-amino-acid polypeptide reads, in one-letter code: 5'-nucleotidase SurE (267 aa).

The a divalent metal cation site is built by D9, D10, S40, and N97.

Belongs to the SurE nucleotidase family. Requires a divalent metal cation as cofactor.

It is found in the cytoplasm. It catalyses the reaction a ribonucleoside 5'-phosphate + H2O = a ribonucleoside + phosphate. Its function is as follows. Nucleotidase that shows phosphatase activity on nucleoside 5'-monophosphates. In Helicobacter pylori (strain J99 / ATCC 700824) (Campylobacter pylori J99), this protein is 5'-nucleotidase SurE.